A 428-amino-acid chain; its full sequence is AP-1 complex subunit mu-2 (428 aa).

An MHD domain is found at 170–426; that stretch reads KNEVFLDVIE…ITMAGEYELR (257 aa).

The protein belongs to the adaptor complexes medium subunit family. In terms of assembly, adaptor protein complex 1 (AP-1) is a heterotetramer composed of two large adaptins (gamma-type subunit and beta-type subunit), a medium adaptin (mu-type subunit) and a small adaptin (sigma-type subunit). Ubiquitous.

It is found in the golgi apparatus. The protein resides in the trans-Golgi network membrane. The protein localises to the early endosome membrane. Its subcellular location is the cytoplasmic vesicle. It localises to the clathrin-coated vesicle membrane. Subunit of clathrin-associated adaptor protein complex 1 that plays a role in protein sorting at the trans-Golgi network and early endosomes (TGN/EE). The AP complexes mediate the recruitment of clathrin to membranes and the recognition of sorting signals within the cytosolic tails of transmembrane cargo molecules. Required for KNOLLE localization at the cell plate to mediate cytokinesis. Functions redundantly with AP1M1 in multiple post-Golgi trafficking pathways leading from the TGN to the vacuole, the plasma membrane, and the cell-division plane. This chain is AP-1 complex subunit mu-2 (AP1M2), found in Arabidopsis thaliana (Mouse-ear cress).